We begin with the raw amino-acid sequence, 155 residues long: Ribosomal RNA large subunit methyltransferase H (155 aa).

Leu72 and Gly104 together coordinate S-adenosyl-L-methionine.

Belongs to the RNA methyltransferase RlmH family. In terms of assembly, homodimer.

It localises to the cytoplasm. The enzyme catalyses pseudouridine(1915) in 23S rRNA + S-adenosyl-L-methionine = N(3)-methylpseudouridine(1915) in 23S rRNA + S-adenosyl-L-homocysteine + H(+). Functionally, specifically methylates the pseudouridine at position 1915 (m3Psi1915) in 23S rRNA. In Fusobacterium nucleatum subsp. nucleatum (strain ATCC 25586 / DSM 15643 / BCRC 10681 / CIP 101130 / JCM 8532 / KCTC 2640 / LMG 13131 / VPI 4355), this protein is Ribosomal RNA large subunit methyltransferase H.